The primary structure comprises 412 residues: MSGSAGSGGTTGSARKRIMKEEDMTKVEFETSEEVDVTPTFDTMGLREDLLRGIYAYGFEKPSAIQQRAIKQIIKGRDVIAQSQSGTGKTATFSISVLQCLDIQVRETQALILAPTRELAVQIQKGLLALGDYMNVQCHACIGGTNVGEDIRKLDYGQHVVAGTPGRVFDMIRRRSLRTRAIKMLVLDEADEMLNKGFKEQIYDVYRYLPPATQVVLISATLPHEILEMTNKFMTDPIRILVKRDELTLEGIKQFFVAVEREEWKFDTLCDLYDTLTITQAVIFCNTKRKVDWLTEKMREANFTVSSMHGDMPQKERESIMKEFRSGASRVLISTDVWARGLDVPQVSLIINYDLPNNRELYIHRIGRSGRYGRKGVAINFVKNDDIRILRDIEQYYSTQIDEMPMNVADLI.

Residues 1–11 (MSGSAGSGGTT) show a composition bias toward gly residues. Residues 1–20 (MSGSAGSGGTTGSARKRIMK) are disordered. The Q motif signature appears at 39-67 (PTFDTMGLREDLLRGIYAYGFEKPSAIQQ). ATP-binding positions include K61, Q66, and 86 to 91 (GTGKTA). Positions 70–240 (IKQIIKGRDV…NKFMTDPIRI (171 aa)) constitute a Helicase ATP-binding domain. The DEAD box signature appears at 188–191 (DEAD). The 162-residue stretch at 251-412 (GIKQFFVAVE…EMPMNVADLI (162 aa)) folds into the Helicase C-terminal domain. Residues D343 and 368-372 (RSGRY) each bind ATP.

The protein belongs to the DEAD box helicase family. eIF4A subfamily. Identified in the spliceosome C complex. Part of the mRNA splicing-dependent exon junction complex (EJC) complex; the core complex contains CASC3, EIF4A3, MAGOH and RBM8A. Component of the ALYREF/THOC4-EJC-RNA complex; in the complex interacts with MAGOH, RBM8A and THOC4 (via the WXHD motif); these interactions are likely specific to RNA-bound EJC. May interact with NOM1. Interacts with POLDIP3. Interacts with CWC22 and PRPF19 in an RNA-independent manner. Direct interaction with CWC22 is mediated by the helicase C-terminal domain. Full interaction with CWC22 occurs only when EIF4A3 is not part of the EJC and prevents EIF4A3 binding to RNA. Interacts with NCBP3.

It localises to the nucleus. Its subcellular location is the nucleus speckle. The protein resides in the cytoplasm. It catalyses the reaction ATP + H2O = ADP + phosphate + H(+). Its function is as follows. ATP-dependent RNA helicase. Involved in pre-mRNA splicing as component of the spliceosome. Core component of the splicing-dependent multiprotein exon junction complex (EJC) deposited at splice junctions on mRNAs. The EJC is a dynamic structure consisting of core proteins and several peripheral nuclear and cytoplasmic associated factors that join the complex only transiently either during EJC assembly or during subsequent mRNA metabolism. The EJC marks the position of the exon-exon junction in the mature mRNA for the gene expression machinery and the core components remain bound to spliced mRNAs throughout all stages of mRNA metabolism thereby influencing downstream processes including nuclear mRNA export, subcellular mRNA localization, translation efficiency and nonsense-mediated mRNA decay (NMD). Its RNA-dependent ATPase and RNA-helicase activities are induced by CASC3, but abolished in presence of the MAGOH-RBM8A heterodimer, thereby trapping the ATP-bound EJC core onto spliced mRNA in a stable conformation. The inhibition of ATPase activity by the MAGOH-RBM8A heterodimer increases the RNA-binding affinity of the EJC. Involved in translational enhancement of spliced mRNAs after formation of the 80S ribosome complex. Binds spliced mRNA in sequence-independent manner, 20-24 nucleotides upstream of mRNA exon-exon junctions. Shows higher affinity for single-stranded RNA in an ATP-bound core EJC complex than after the ATP is hydrolyzed. Involved in the splicing modulation of BCL2L1/Bcl-X (and probably other apoptotic genes); specifically inhibits formation of proapoptotic isoforms; the function is different from the established EJC assembly. Involved in craniofacial development. The polypeptide is Eukaryotic initiation factor 4A-III (EIF4A3) (Gallus gallus (Chicken)).